Here is a 416-residue protein sequence, read N- to C-terminus: Pigment epithelium-derived factor (416 aa).

A signal peptide spans 1–20; it reads MQALVLLLWTGALLGFGRCQ. Phosphoserine is present on residues S112 and S225. An N-linked (GlcNAc...) asparagine glycan is attached at N283.

The protein belongs to the serpin family. In terms of assembly, interacts with PNPLA2; this interaction stimulates the phospholipase A2 activity of PNPLA2. Retinal pigment epithelial cells. Located in the interphotoreceptor matrix (IPM) which is between the retinal pigment epithelium and the neural retina.

It localises to the secreted. Its subcellular location is the melanosome. Neurotrophic protein; induces extensive neuronal differentiation in retinoblastoma cells. Potent inhibitor of angiogenesis. As it does not undergo the S (stressed) to R (relaxed) conformational transition characteristic of active serpins, it exhibits no serine protease inhibitory activity. In Bos taurus (Bovine), this protein is Pigment epithelium-derived factor (SERPINF1).